The chain runs to 329 residues: UDP-glucose 4-epimerase (329 aa).

Residues 11–12 (YV), 31–36 (DNFSTG), 51–52 (DV), 71–75 (FAARS), T115, Y139, K143, and F167 each bind NAD(+). Substrate contacts are provided by T115 and Y139. Residue Y139 is the Proton acceptor of the active site. Substrate-binding positions include N168, 185–186 (HL), 202–204 (FMF), R217, and 277–280 (RAGD).

It belongs to the NAD(P)-dependent epimerase/dehydratase family. As to quaternary structure, homodimer. It depends on NAD(+) as a cofactor.

The enzyme catalyses UDP-alpha-D-glucose = UDP-alpha-D-galactose. Its pathway is carbohydrate metabolism; galactose metabolism. Involved in the metabolism of galactose. Catalyzes the conversion of UDP-galactose (UDP-Gal) to UDP-glucose (UDP-Glc) through a mechanism involving the transient reduction of NAD. This is UDP-glucose 4-epimerase (galE) from Corynebacterium glutamicum (strain ATCC 13032 / DSM 20300 / JCM 1318 / BCRC 11384 / CCUG 27702 / LMG 3730 / NBRC 12168 / NCIMB 10025 / NRRL B-2784 / 534).